The primary structure comprises 145 residues: Mannitol-specific phosphotransferase enzyme IIA component (145 aa).

The PTS EIIA type-2 domain occupies 4 to 143 (TILSTETIKV…QEVLAFLGEV (140 aa)). The Tele-phosphohistidine intermediate role is filled by histidine 64. Histidine 64 is subject to Phosphohistidine; by HPr.

It is found in the cytoplasm. Its function is as follows. The phosphoenolpyruvate-dependent sugar phosphotransferase system (sugar PTS), a major carbohydrate active transport system, catalyzes the phosphorylation of incoming sugar substrates concomitantly with their translocation across the cell membrane. The enzyme II CmtAB PTS system is involved in D-mannitol transport. This chain is Mannitol-specific phosphotransferase enzyme IIA component (mtlF), found in Halalkalibacterium halodurans (strain ATCC BAA-125 / DSM 18197 / FERM 7344 / JCM 9153 / C-125) (Bacillus halodurans).